The chain runs to 185 residues: Prenylated Rab acceptor protein 1 (185 aa).

Residues 1-78 (MAAEKDQQKD…RNVEYYQSNY (78 aa)) are Cytoplasmic-facing. Residues 30-54 (AGRERLERRRATIRPWSSFVDQRRF) form a required for interaction with prenylated RAB3A and VAMP2 region. A run of 2 helical transmembrane segments spans residues 79 to 94 (VFVFLGLILYCVVTSP) and 95 to 112 (MLLVALAVFFGACYILYL). At 113 to 131 (RTLQSKFVLFGREVSPAHQ) the chain is on the cytoplasmic side. Transmembrane regions (helical) follow at residues 132–148 (YALAGGVSFPFFWLAGA) and 149–165 (GSAVFWVLGATLVVIGS). The required for interaction with GDI1 stretch occupies residues 165-185 (SHAAFHQMEAVDGEELQMEPV). Residues 166 to 185 (HAAFHQMEAVDGEELQMEPV) are Cytoplasmic-facing. The required for interaction with prenylated RAB3A and VAMP2 stretch occupies residues 175-185 (VDGEELQMEPV). The segment at 175 to 185 (VDGEELQMEPV) is homodimerization.

This sequence belongs to the PRA1 family. As to quaternary structure, homodimer. Interacts with VAMP2 (synaptobrevin-2), prenylated Rab proteins, GDI1, NDRG1 and PCLO.

The protein localises to the cell membrane. It localises to the cytoplasm. It is found in the golgi apparatus. The protein resides in the cytoplasmic vesicle. Its subcellular location is the secretory vesicle. The protein localises to the synaptic vesicle. General Rab protein regulator required for vesicle formation from the Golgi complex. May control vesicle docking and fusion by mediating the action of Rab GTPases to the SNARE complexes. In addition it inhibits the removal of Rab GTPases from the membrane by GDI1. This Canis lupus familiaris (Dog) protein is Prenylated Rab acceptor protein 1 (RABAC1).